The chain runs to 257 residues: Acyl-[acyl-carrier-protein]--UDP-N-acetylglucosamine O-acyltransferase (257 aa).

Belongs to the transferase hexapeptide repeat family. LpxA subfamily. Homotrimer.

Its subcellular location is the cytoplasm. It catalyses the reaction a (3R)-hydroxyacyl-[ACP] + UDP-N-acetyl-alpha-D-glucosamine = a UDP-3-O-[(3R)-3-hydroxyacyl]-N-acetyl-alpha-D-glucosamine + holo-[ACP]. It participates in glycolipid biosynthesis; lipid IV(A) biosynthesis; lipid IV(A) from (3R)-3-hydroxytetradecanoyl-[acyl-carrier-protein] and UDP-N-acetyl-alpha-D-glucosamine: step 1/6. In terms of biological role, involved in the biosynthesis of lipid A, a phosphorylated glycolipid that anchors the lipopolysaccharide to the outer membrane of the cell. The polypeptide is Acyl-[acyl-carrier-protein]--UDP-N-acetylglucosamine O-acyltransferase (Anaeromyxobacter dehalogenans (strain 2CP-1 / ATCC BAA-258)).